Reading from the N-terminus, the 494-residue chain is UPF0371 protein SUB1165 (494 aa).

It belongs to the UPF0371 family.

This chain is UPF0371 protein SUB1165, found in Streptococcus uberis (strain ATCC BAA-854 / 0140J).